A 2603-amino-acid chain; its full sequence is Ankyrin repeat domain-containing protein 17 (2603 aa).

Position 1 is an N-acetylmethionine (Met-1). 2 stretches are compositionally biased toward low complexity: residues 1-34 (MEKA…AAAE) and 42-53 (SSRARSASSPRG). The tract at residues 1–143 (MEKATVPVAA…SFILDQDDLE (143 aa)) is disordered. Phosphoserine is present on residues Ser-19 and Ser-50. Positions 63–79 (KKKPPQQQHHKAKRNRT) are enriched in basic residues. Positions 84–94 (SSSESSSDSDN) are enriched in low complexity. A compositionally biased stretch (gly residues) spans 95-111 (SGGGGGGGGGGGGGGGT). Acidic residues predominate over residues 116-131 (SEEEEDDDDEEEEVSE). Residue Ser-156 is modified to Phosphoserine. ANK repeat units follow at residues 233-262 (SDNR…SVNE), 266-295 (EGES…NVED), 300-329 (GDIT…DVNA), 333-362 (TGNT…SIED), 366-395 (NGHT…GINT), 400-429 (FKES…DQEH), 433-462 (EMHT…QVNM), 466-495 (SFES…SLEE), 499-528 (EGYT…NINA), 533-562 (TQET…DIEL), 563-592 (GCST…NVHA), 596-625 (TGDT…DLEH), 629-658 (GGRT…NVNR), 663-692 (NDHT…DPTH), and 696-725 (DGST…NLLS). Residue Lys-318 forms a Glycyl lysine isopeptide (Lys-Gly) (interchain with G-Cter in SUMO2) linkage. Ser-803 carries the phosphoserine modification. ANK repeat units lie at residues 1082–1111 (NHDT…SIEH), 1115–1144 (KGFT…DIEA), 1149–1178 (TKDT…NKEH), 1182–1211 (SDYT…EINS), 1217–1246 (LGIS…DINA), 1251–1280 (NRNT…NVEH), 1284–1313 (TGLT…DVNA), 1319–1348 (SRDT…HIDV), 1352–1381 (KGNT…DVDA), and 1385–1414 (RKIT…QFPS). Positions 1442–1526 (VQAKDRQAAE…EKEKLKVEDE (85 aa)) form a coiled coil. Ser-1457 is modified (phosphoserine). Disordered stretches follow at residues 1479-1500 (AKRE…RKLE) and 1517-1717 (EKEK…QKRE). Residues 1481–1491 (REKRKEKRRKK) are compositionally biased toward basic residues. Low complexity-rich tracts occupy residues 1531–1550 (TEPP…TWTT), 1602–1611 (ESKSSSTSES), and 1620–1632 (SSCS…SNSS). Phosphoserine occurs at positions 1635 and 1639. 2 stretches are compositionally biased toward polar residues: residues 1642 to 1652 (VVTTTVSSKKQ) and 1675 to 1703 (LSET…SPNG). Phosphoserine occurs at positions 1696, 1700, and 1709. The 65-residue stretch at 1725–1789 (RRSKKVSVPS…ESTRQATQLI (65 aa)) folds into the KH domain. An Asymmetric dimethylarginine modification is found at Arg-1874. Disordered regions lie at residues 1906-1995 (PRLP…PSVR), 2011-2192 (TTVT…HKNS), and 2273-2332 (VVSS…YGSV). Composition is skewed to low complexity over residues 1950 to 1995 (SNQN…PSVR) and 2011 to 2028 (TTVT…TNAT). Ser-2042, Ser-2044, Ser-2045, Ser-2047, Ser-2059, and Ser-2067 each carry phosphoserine. Residues 2066 to 2078 (ASPNKVASSSEQE) show a composition bias toward polar residues. Residues 2095–2106 (SSSSSGSSSAHS) are compositionally biased toward low complexity. Polar residues-rich tracts occupy residues 2107–2127 (NQQQ…QQSQ) and 2273–2303 (VVSS…SDTS). Positions 2308-2318 (FRPPLQRPAPS) are enriched in pro residues. 2 positions are modified to phosphoserine: Ser-2373 and Ser-2401. The segment at 2381–2423 (CSSASNDSSAQSVSSGVRAPSPAPSSVPLGSEKPSNVSQDRKV) is disordered. Low complexity predominate over residues 2382-2411 (SSASNDSSAQSVSSGVRAPSPAPSSVPLGS).

In terms of assembly, interacts (via N-terminus) with NOD2. Interacts with CDK2, MCM3, MCM5, MCM7, CDC6 and PCNA. Interacts with MAVS and IFIH1. Interacts (via the second ankyrin repeat cluster) with DDX58. (Microbial infection) Interacts with enterovirus 71/EV71 capsid protein VP1. Post-translationally, phosphorylated by CDK2. In terms of tissue distribution, ubiquitously expressed.

The protein localises to the cytoplasm. It localises to the nucleus. Its function is as follows. Could play pivotal roles in cell cycle and DNA regulation. Involved in innate immune defense against viruse by positively regulating the viral dsRNA receptors DDX58 and IFIH1 signaling pathways. Involves in NOD2- and NOD1-mediated responses to bacteria suggesting a role in innate antibacterial immune pathways too. Target of enterovirus 71 which is the major etiological agent of HFMD (hand, foot and mouth disease). Could play a central role for the formation and/or maintenance of the blood vessels of the circulation system. The sequence is that of Ankyrin repeat domain-containing protein 17 (ANKRD17) from Homo sapiens (Human).